A 541-amino-acid polypeptide reads, in one-letter code: MNAIVEQLKSTAAATKATDLRAAFAADAQRFSRFSVALDDLLMDFSKTAVNDDILKLLVKLAEDGGVEKKREEMFSGKAINFTEDRAVLHTALRNRSNTPVLVDGKDVMPDVNAVLAAMGKFADEIRSGALKGATGKAITDVINIGIGGSDLGPVMATLALAPFHDGPRAHFVSNIDGAHIADILKLVQPETTLFIVASKTFTTVETMTNAQTARNFIAKALGEAAVQHHFAAVSTALDKVAAFGIDSARVFGFWDWVGGRYSIWSAIGLPLMIAIGPENFGKFLDGAHAVDNHFRKAPITENLPMLLGLIGFYHRNVLGYPTRAILPYDQRLSRFPAYLQQLDMESNGKGVTIDGTPVEGNSGPVVWGEPGTNGQHAFYQLIHQGTSIIPAEFMIAANAFEPELRHQHQLLISNVLAQSEALMKGRTFAEAKKQLTDKGMDDKKADFIAPHRVFTGNRPSITFVYDKLTPYALGRLIALYEHRVFVEGVLFRINSFDQWGVELGKELATGLLPVVEGKESAEGHDSSTQGLVAALAKLAK.

The active-site Proton donor is E346. Active-site residues include H377 and K506.

This sequence belongs to the GPI family.

The protein resides in the cytoplasm. The catalysed reaction is alpha-D-glucose 6-phosphate = beta-D-fructose 6-phosphate. It participates in carbohydrate biosynthesis; gluconeogenesis. The protein operates within carbohydrate degradation; glycolysis; D-glyceraldehyde 3-phosphate and glycerone phosphate from D-glucose: step 2/4. In terms of biological role, catalyzes the reversible isomerization of glucose-6-phosphate to fructose-6-phosphate. The sequence is that of Glucose-6-phosphate isomerase from Rhizobium etli (strain CIAT 652).